Reading from the N-terminus, the 115-residue chain is Transcription and mRNA export factor ENY2 (115 aa).

The protein belongs to the ENY2 family. As to quaternary structure, component of a deubiquitination module (DUB module) formed by ENY2, SGF11, and UBP22 in Arabidopsis. Interacts directly with SGF11, but not with UBP22. Interacts with MOS4. In terms of tissue distribution, expressed in roots, cotyledons, leaves and upper part of sepals.

It is found in the nucleus. It localises to the nucleoplasm. Functionally, component of a deubiquitination module (DUB module) that specifically deubiquinates monoubiquinated histone H2B (H2Bub). Does not seem to be a component of the TREX-2 complex. Seems to act independently of the SAGA multiprotein complex. The DUB module is responsible for the major H2Bub deubiquitinase activity in Arabidopsis. This chain is Transcription and mRNA export factor ENY2, found in Arabidopsis thaliana (Mouse-ear cress).